Consider the following 263-residue polypeptide: uncharacterized protein (263 aa).

An N-terminal signal peptide occupies residues 1–22 (MEYLKRLALLISVIILTIFIMG). A lipid anchor (N-palmitoyl cysteine) is attached at Cys-23. The S-diacylglycerol cysteine moiety is linked to residue Cys-23.

It belongs to the staphylococcal tandem lipoprotein family.

It localises to the cell membrane. This is an uncharacterized protein from Staphylococcus aureus (strain USA300).